A 329-amino-acid chain; its full sequence is Protoheme IX farnesyltransferase (329 aa).

7 helical membrane-spanning segments follow: residues 61-81, 108-128, 130-150, 158-178, 186-206, 243-263, and 284-304; these read LACTLGGGALAAAAAGVLNCL, AFLIAVALACGASLLLVAGVN, LAAGLSLLGLCSYVLLYTIVL, IVIGGVAGAIPPLVGAAAATG, WLFGLVMLWTPAHFWALALLL, LLGVLTLPSGGLFYGLMVLPF, and AKGLFRWSILYLFGICLLLLL.

It belongs to the UbiA prenyltransferase family. Protoheme IX farnesyltransferase subfamily.

The protein resides in the cell inner membrane. It carries out the reaction heme b + (2E,6E)-farnesyl diphosphate + H2O = Fe(II)-heme o + diphosphate. Its pathway is porphyrin-containing compound metabolism; heme O biosynthesis; heme O from protoheme: step 1/1. Converts heme B (protoheme IX) to heme O by substitution of the vinyl group on carbon 2 of heme B porphyrin ring with a hydroxyethyl farnesyl side group. This is Protoheme IX farnesyltransferase from Synechococcus sp. (strain RCC307).